Reading from the N-terminus, the 742-residue chain is Photosystem I P700 chlorophyll a apoprotein A2 (742 aa).

The next 8 helical transmembrane spans lie at 46–69, 135–158, 175–199, 273–291, 336–359, 375–401, 423–445, and 525–543; these read LFST…FHIA, LFQG…LHLQ, LNHH…HVAI, IAHH…GHMY, LHFQ…QHMG, SALY…IFFV, ALIS…IYVH, and FLVH…LILI. [4Fe-4S] cluster is bound by residues Cys567 and Cys576. Helical transmembrane passes span 583–604 and 651–673; these read ATYL…YWHW and LSPW…MFLI. Divinyl chlorophyll a contacts are provided by His662, Met670, and Tyr678. Position 679 (Trp679) interacts with phylloquinone. A helical membrane pass occupies residues 715-735; sequence LVGLTHFTVGNFVTFGAFVIA.

It belongs to the PsaA/PsaB family. The PsaA/B heterodimer binds the P700 divinyl chlorophyll special pair and subsequent electron acceptors. PSI consists of a core antenna complex that captures photons, and an electron transfer chain that converts photonic excitation into a charge separation. The cyanobacterial PSI reaction center is composed of one copy each of PsaA,B,C,D,E,F,I,J,K,L,M and X, and forms trimeric complexes. PSI electron transfer chain: 5 divinyl chlorophyll a, 1 divinyl chlorophyll a', 2 phylloquinones and 3 4Fe-4S clusters. PSI core antenna: 90 divinyl chlorophyll a, 22 carotenoids, 3 phospholipids and 1 galactolipid. P700 is a divinyl chlorophyll a/divinyl chlorophyll a' dimer, A0 is one or more divinyl chlorophyll a, A1 is one or both phylloquinones and FX is a shared 4Fe-4S iron-sulfur center. serves as cofactor.

It is found in the cellular thylakoid membrane. It carries out the reaction reduced [plastocyanin] + hnu + oxidized [2Fe-2S]-[ferredoxin] = oxidized [plastocyanin] + reduced [2Fe-2S]-[ferredoxin]. In terms of biological role, psaA and PsaB bind P700, the primary electron donor of photosystem I (PSI), as well as the electron acceptors A0, A1 and FX. PSI is a plastocyanin/cytochrome c6-ferredoxin oxidoreductase, converting photonic excitation into a charge separation, which transfers an electron from the donor P700 chlorophyll pair to the spectroscopically characterized acceptors A0, A1, FX, FA and FB in turn. Oxidized P700 is reduced on the lumenal side of the thylakoid membrane by plastocyanin or cytochrome c6. This chain is Photosystem I P700 chlorophyll a apoprotein A2, found in Prochlorococcus marinus (strain NATL2A).